Reading from the N-terminus, the 493-residue chain is Non-cyanogenic beta-glucosidase (493 aa).

The signal sequence occupies residues 1–18 (MDFIVAIFALFVISSFTI). A glycan (N-linked (GlcNAc...) asparagine) is linked at Asn34. Residues Gln54, His158, and 203 to 204 (NE) each bind a beta-D-glucoside. Catalysis depends on Glu204, which acts as the Proton donor. A glycan (N-linked (GlcNAc...) asparagine) is linked at Asn335. Tyr346 is a binding site for a beta-D-glucoside. N-linked (GlcNAc...) asparagine glycans are attached at residues Asn371 and Asn412. Residues Glu422, Trp471, 478-479 (EW), and Phe487 each bind a beta-D-glucoside. Residue Glu422 is the Nucleophile of the active site.

This sequence belongs to the glycosyl hydrolase 1 family. Leaves.

The catalysed reaction is Hydrolysis of terminal, non-reducing beta-D-glucosyl residues with release of beta-D-glucose.. The protein is Non-cyanogenic beta-glucosidase of Trifolium repens (Creeping white clover).